The chain runs to 189 residues: Apolipoprotein D (189 aa).

A signal peptide spans 1–20 (MVTMLMFLATLAGLFTTAKG). Q21 carries the post-translational modification Pyrrolidone carboxylic acid. 2 disulfides stabilise this stretch: C28–C134 and C61–C185. N-linked (GlcNAc...) asparagine glycans are attached at residues N65 and N98.

It belongs to the calycin superfamily. Lipocalin family. In terms of assembly, homodimer. As to expression, highest levels of expression in brain, testis, virgin mammary gland and salivary gland. Moderate levels in skeletal muscle, lactating mammary gland and thymus. Low levels in lung and lymph node. No expression in kidney, pancreas, liver or spleen.

The protein localises to the secreted. APOD occurs in the macromolecular complex with lecithin-transport and binding of bilin. Appears to be able to transport a variety of ligands in a number of different contexts. This Mus musculus (Mouse) protein is Apolipoprotein D (Apod).